The following is a 123-amino-acid chain: Small ribosomal subunit protein uS12 (123 aa).

The residue at position 89 (Asp-89) is a 3-methylthioaspartic acid.

The protein belongs to the universal ribosomal protein uS12 family. In terms of assembly, part of the 30S ribosomal subunit. Contacts proteins S8 and S17. May interact with IF1 in the 30S initiation complex.

Its function is as follows. With S4 and S5 plays an important role in translational accuracy. Functionally, interacts with and stabilizes bases of the 16S rRNA that are involved in tRNA selection in the A site and with the mRNA backbone. Located at the interface of the 30S and 50S subunits, it traverses the body of the 30S subunit contacting proteins on the other side and probably holding the rRNA structure together. The combined cluster of proteins S8, S12 and S17 appears to hold together the shoulder and platform of the 30S subunit. The chain is Small ribosomal subunit protein uS12 from Sinorhizobium medicae (strain WSM419) (Ensifer medicae).